A 149-amino-acid chain; its full sequence is D-aminoacyl-tRNA deacylase (149 aa).

Residues 137-138 (GP) carry the Gly-cisPro motif, important for rejection of L-amino acids motif.

This sequence belongs to the DTD family. In terms of assembly, homodimer.

The protein resides in the cytoplasm. It carries out the reaction glycyl-tRNA(Ala) + H2O = tRNA(Ala) + glycine + H(+). The enzyme catalyses a D-aminoacyl-tRNA + H2O = a tRNA + a D-alpha-amino acid + H(+). An aminoacyl-tRNA editing enzyme that deacylates mischarged D-aminoacyl-tRNAs. Also deacylates mischarged glycyl-tRNA(Ala), protecting cells against glycine mischarging by AlaRS. Acts via tRNA-based rather than protein-based catalysis; rejects L-amino acids rather than detecting D-amino acids in the active site. By recycling D-aminoacyl-tRNA to D-amino acids and free tRNA molecules, this enzyme counteracts the toxicity associated with the formation of D-aminoacyl-tRNA entities in vivo and helps enforce protein L-homochirality. The protein is D-aminoacyl-tRNA deacylase of Clostridium botulinum (strain Eklund 17B / Type B).